Consider the following 546-residue polypeptide: Methionine--tRNA ligase (546 aa).

The 'HIGH' region motif lies at 15–25 (PYANGPIHLGH). Zn(2+)-binding residues include cysteine 146, cysteine 149, cysteine 159, and cysteine 162. The short motif at 332–336 (KMSKS) is the 'KMSKS' region element. Lysine 335 contacts ATP.

This sequence belongs to the class-I aminoacyl-tRNA synthetase family. MetG type 1 subfamily. Monomer. The cofactor is Zn(2+).

Its subcellular location is the cytoplasm. The catalysed reaction is tRNA(Met) + L-methionine + ATP = L-methionyl-tRNA(Met) + AMP + diphosphate. In terms of biological role, is required not only for elongation of protein synthesis but also for the initiation of all mRNA translation through initiator tRNA(fMet) aminoacylation. The polypeptide is Methionine--tRNA ligase (Coxiella burnetii (strain RSA 331 / Henzerling II)).